A 379-amino-acid chain; its full sequence is Forkhead box protein E1 (379 aa).

Polar residues predominate over residues 1 to 11; sequence MTAESQQSPTR. Positions 1–65 are disordered; it reads MTAESQQSPT…RRRKRPLQKG (65 aa). A compositionally biased stretch (basic residues) spans 54 to 63; sequence KGRRRKRPLQ. Positions 66 to 160 form a DNA-binding region, fork-head; the sequence is KPPYSYIALI…DSGSFLRRRK (95 aa). The interval 239-265 is disordered; that stretch reads HSGSEHAQPPNRSISPEVNSTSSSSCN. A compositionally biased stretch (low complexity) spans 251 to 265; sequence SISPEVNSTSSSSCN.

As to expression, first expressed at late neural tube and early tailbud stages in the hypophyseal placode. Expression continues in the developing pituitary at late tailbud stages. As development progresses, expressed in the mesoderm of the branchial arches. At stage 38, expressed in the developing thyroid and in the pharyngeal endoderm.

It is found in the nucleus. In terms of biological role, transcription factor that binds consensus sites on a variety of gene promoters and activate their transcription. The sequence is that of Forkhead box protein E1 from Xenopus laevis (African clawed frog).